The chain runs to 344 residues: Phosphoribosylformylglycinamidine cyclo-ligase (344 aa).

The protein belongs to the AIR synthase family.

The protein localises to the cytoplasm. The catalysed reaction is 2-formamido-N(1)-(5-O-phospho-beta-D-ribosyl)acetamidine + ATP = 5-amino-1-(5-phospho-beta-D-ribosyl)imidazole + ADP + phosphate + H(+). The protein operates within purine metabolism; IMP biosynthesis via de novo pathway; 5-amino-1-(5-phospho-D-ribosyl)imidazole from N(2)-formyl-N(1)-(5-phospho-D-ribosyl)glycinamide: step 2/2. The polypeptide is Phosphoribosylformylglycinamidine cyclo-ligase (Neisseria meningitidis serogroup B (strain ATCC BAA-335 / MC58)).